Consider the following 410-residue polypeptide: MAKRQLLMLGIRTSFHTIAAVLVAGLIFTAVFLSRNSLPKENPQSHGVTDRGGDSGRECNLFEGKWVFDNVSYPLYKEEDCKFMSDQLACEKFGRKDLSYKFWRWQPHTCDLPRFNGTKLLERLRNKRMVYVGDSLNRGQWVSMVCMVSSVITNPKAMYMHNNGSNLITFKALEYNATIDYYWAPLLVESNSDDPTNHRFPDRIVRIQSIEKHARHWTNSDIIVFNSYLWWRMPHIKSLWGSFEKLDGIYKEVEMVRVYEMALQTLSQWLEVHVNPNITKLFFMSMSPTHERAEEWGGILNQNCYGEASLIDKEGYTGRGSDPKMMRVLENVLDGLKNRGLNMQMINITQLSEYRKEGHPSIYRKQWGTVKENEISNPSSNADCIHWCLPGVPDVWNELLYAYILDHHSS.

Residues 13 to 33 traverse the membrane as a helical; Signal-anchor for type II membrane protein segment; sequence TSFHTIAAVLVAGLIFTAVFL. Residues 133 to 135 carry the GDS motif motif; it reads GDS. Residues 383–397 carry the DCXHWCLPGXXDXWN motif motif; it reads DCIHWCLPGVPDVWN.

The protein belongs to the PC-esterase family. TBL subfamily.

It is found in the golgi apparatus membrane. Its function is as follows. May act as a bridging protein that binds pectin and other cell wall polysaccharides. Probably involved in maintaining esterification of pectins. May be involved in the specific O-acetylation of cell wall polymers. The protein is Protein trichome birefringence-like 34 (TBL34) of Arabidopsis thaliana (Mouse-ear cress).